We begin with the raw amino-acid sequence, 677 residues long: Methionine--tRNA ligase (677 aa).

Positions 15–25 match the 'HIGH' region motif; that stretch reads PYANGSIHLGH. Positions 146, 149, 159, and 162 each coordinate Zn(2+). Positions 333–337 match the 'KMSKS' region motif; it reads KMSKS. K336 serves as a coordination point for ATP. The region spanning 575–677 is the tRNA-binding domain; sequence DFAKVDLRVA…AGAKPGHQVK (103 aa).

This sequence belongs to the class-I aminoacyl-tRNA synthetase family. MetG type 1 subfamily. Homodimer. The cofactor is Zn(2+).

The protein resides in the cytoplasm. It catalyses the reaction tRNA(Met) + L-methionine + ATP = L-methionyl-tRNA(Met) + AMP + diphosphate. In terms of biological role, is required not only for elongation of protein synthesis but also for the initiation of all mRNA translation through initiator tRNA(fMet) aminoacylation. The sequence is that of Methionine--tRNA ligase from Escherichia coli O157:H7.